The primary structure comprises 438 residues: Aspartate--tRNA(Asp/Asn) ligase (438 aa).

Position 176 (E176) interacts with L-aspartate. The aspartate stretch occupies residues 198 to 201 (QLYK). Residue R220 participates in L-aspartate binding. ATP is bound by residues 220 to 222 (RAE), 228 to 230 (RHL), and E361. E361 and S364 together coordinate Mg(2+). S364 and R368 together coordinate L-aspartate. An ATP-binding site is contributed by 409 to 412 (GADR).

This sequence belongs to the class-II aminoacyl-tRNA synthetase family. Type 2 subfamily. Homodimer. It depends on Mg(2+) as a cofactor.

It localises to the cytoplasm. The enzyme catalyses tRNA(Asx) + L-aspartate + ATP = L-aspartyl-tRNA(Asx) + AMP + diphosphate. Aspartyl-tRNA synthetase with relaxed tRNA specificity since it is able to aspartylate not only its cognate tRNA(Asp) but also tRNA(Asn). Reaction proceeds in two steps: L-aspartate is first activated by ATP to form Asp-AMP and then transferred to the acceptor end of tRNA(Asp/Asn). This is Aspartate--tRNA(Asp/Asn) ligase from Methanococcus maripaludis (strain C5 / ATCC BAA-1333).